The following is a 2603-amino-acid chain: Ankyrin repeat domain-containing protein 17 (2603 aa).

Met-1 bears the N-acetylmethionine mark. Low complexity predominate over residues 1–32 (MEKATVPAAAEGEGSPPAAAAVAAPPAAAAAE). Residues 1-127 (MEKATVPAAA…DDDEEEEVSE (127 aa)) form a disordered region. Phosphoserine is present on residues Ser-15 and Ser-42. Residues 68-77 (PHHKAKRNRT) are compositionally biased toward basic residues. A compositionally biased stretch (low complexity) spans 82–92 (SSSESSSDSDN). A compositionally biased stretch (gly residues) spans 93-107 (SGGGGGGGGGGGGGT). Acidic residues predominate over residues 112–127 (SEEEEDDDDEEEEVSE). A Phosphoserine modification is found at Ser-152. ANK repeat units follow at residues 229–258 (SDNR…SVNE), 262–291 (EGES…NVED), 296–325 (GDIT…DVNA), 329–358 (TGNT…SIED), 362–391 (NGHT…GINT), 396–425 (FKES…DQEH), 429–458 (EMHT…QVNM), 462–491 (SFES…SLEE), 495–524 (EGYT…NINA), 529–558 (TQET…DIEL), 559–588 (GCST…NVHA), 592–621 (TGDT…DLEH), 625–654 (GGRT…NVNR), 659–688 (NDHT…DPTH), and 692–721 (DGST…NLLA). A Glycyl lysine isopeptide (Lys-Gly) (interchain with G-Cter in SUMO2) cross-link involves residue Lys-314. Residues 770–792 (VRSKAASKQKSNSHLPANSQDVQ) are disordered. The span at 775 to 792 (ASKQKSNSHLPANSQDVQ) shows a compositional bias: polar residues. Ser-799 is modified (phosphoserine). ANK repeat units lie at residues 1078 to 1107 (NHDT…SIEH), 1111 to 1140 (KGFT…DIEA), 1145 to 1174 (TKDT…NKEH), 1178 to 1207 (SDYT…EINS), 1213 to 1242 (LGIS…DINA), 1247 to 1276 (NRNT…NVEH), 1280 to 1309 (TGLT…DVNA), 1315 to 1344 (SRDT…HIDV), 1348 to 1377 (KGNT…DVDA), and 1381 to 1410 (RKIT…QFPS). Positions 1438–1522 (VQAKDRQAAE…EKEKLKVEEE (85 aa)) form a coiled coil. Residue Ser-1453 is modified to Phosphoserine. Disordered regions lie at residues 1475–1496 (AKRE…RKLE) and 1513–1713 (EKEK…PKRE). The segment covering 1477-1487 (REKRKEKRRKK) has biased composition (basic residues). Composition is skewed to low complexity over residues 1526–1546 (LTEP…TWTT), 1598–1607 (ESKSSSTSES), and 1616–1636 (SSCS…NHAS). Ser-1631 carries the phosphoserine modification. 2 stretches are compositionally biased toward polar residues: residues 1638 to 1648 (VVTTTMASKKQ) and 1671 to 1699 (LSET…SPNG). Phosphoserine occurs at positions 1692, 1696, and 1705. Residues 1721 to 1785 (RRSKKVSVPS…ESTRQATQLI (65 aa)) enclose the KH domain. Position 1870 is an asymmetric dimethylarginine (Arg-1870). 3 disordered regions span residues 1902-1991 (PRLP…PSVR), 2007-2195 (TTVT…SSSA), and 2269-2327 (VSSQ…YGSV). 2 stretches are compositionally biased toward low complexity: residues 1946–1989 (SNQN…SSPS) and 2007–2024 (TTVT…TNAT). 6 positions are modified to phosphoserine: Ser-2038, Ser-2040, Ser-2041, Ser-2043, Ser-2055, and Ser-2063. Low complexity-rich tracts occupy residues 2068–2077 (ASASEQEASS), 2087–2108 (RPPH…QQPP), and 2175–2189 (PPSH…TPAP). Residues 2269 to 2298 (VSSQSTPESMLSGKSSYLPNSDPLHQSDTS) are compositionally biased toward polar residues. Positions 2303-2313 (FRPPLQRPAPS) are enriched in pro residues. Residue Ser-2373 is modified to Phosphoserine. The disordered stretch occupies residues 2378–2447 (LTPCSSASNE…TGTSAPSVIG (70 aa)). Positions 2379 to 2391 (TPCSSASNESPAQ) are enriched in polar residues. A compositionally biased stretch (low complexity) spans 2392 to 2411 (SVSSGVRAPSPAPSSVPLGS). Ser-2401 carries the phosphoserine modification. Residues 2435-2447 (IRQTGTSAPSVIG) show a composition bias toward polar residues.

Interacts (via N-terminus) with NOD2. Interacts with CDK2, MCM3, MCM5, MCM7, CDC6 and PCNA. Interacts with MAVS and IFIH1. Interacts (via the second ankyrin repeat cluster) with RIGI. In terms of processing, phosphorylated by CDK2. Highly expressed in fetal liver. Detected in adult liver cells, ovarian oocytes, seminiferous tubules of the testes and pelvic region of the kidney. It was not detected in heart, gut, lung, spleen and skeletal muscle. Earliest specific in situ marker of hepatic differentiation during embryogenesis, useful for characterization of inductive events involved in hepatic specification.

Its subcellular location is the cytoplasm. The protein resides in the nucleus. Functionally, could play pivotal roles in cell cycle and DNA regulation. Involved in innate immune defense against viruse by positively regulating the viral dsRNA receptors RIGI and IFIH1 signaling pathways. Involves in NOD2- and NOD1-mediated responses to bacteria suggesting a role in innate antibacterial immune pathways too. Could play a central role for the formation and/or maintenance of the blood vessels of the circulation system. In Mus musculus (Mouse), this protein is Ankyrin repeat domain-containing protein 17 (Ankrd17).